Reading from the N-terminus, the 140-residue chain is Lysozyme D (140 aa).

Positions M1–G18 are cleaved as a signal peptide. The C-type lysozyme domain maps to R19 to F140. Cystine bridges form between C24–C139, C45–C129, C80–C96, and C92–C110. Residues E50 and D68 contribute to the active site.

It belongs to the glycosyl hydrolase 22 family. As to expression, found in the midgut.

The catalysed reaction is Hydrolysis of (1-&gt;4)-beta-linkages between N-acetylmuramic acid and N-acetyl-D-glucosamine residues in a peptidoglycan and between N-acetyl-D-glucosamine residues in chitodextrins.. Functionally, unlikely to play an active role in the humoral immune defense. May have a function in the digestion of bacteria in the food. In Drosophila melanogaster (Fruit fly), this protein is Lysozyme D (LysD).